The following is a 358-amino-acid chain: Aromatic amino acid aminotransferase (358 aa).

Lysine 222 is subject to N6-(pyridoxal phosphate)lysine.

Belongs to the class-II pyridoxal-phosphate-dependent aminotransferase family. Homodimer. Pyridoxal 5'-phosphate is required as a cofactor.

The catalysed reaction is an aromatic L-alpha-amino acid + 2-oxoglutarate = an aromatic oxo-acid + L-glutamate. Functionally, aminotransferase that catalyzes the conversion of aromatic amino acids and 2-oxoglutarate into corresponding aromatic oxo acids and L-glutamate. This is Aromatic amino acid aminotransferase from Mycobacterium sp. (strain KMS).